Reading from the N-terminus, the 367-residue chain is UDP-N-acetylglucosamine--N-acetylmuramyl-(pentapeptide) pyrophosphoryl-undecaprenol N-acetylglucosamine transferase (367 aa).

UDP-N-acetyl-alpha-D-glucosamine contacts are provided by residues 11-13, asparagine 125, arginine 163, serine 197, and glutamine 289; that span reads TAG.

This sequence belongs to the glycosyltransferase 28 family. MurG subfamily.

The protein localises to the cell membrane. The enzyme catalyses di-trans,octa-cis-undecaprenyl diphospho-N-acetyl-alpha-D-muramoyl-L-alanyl-D-glutamyl-meso-2,6-diaminopimeloyl-D-alanyl-D-alanine + UDP-N-acetyl-alpha-D-glucosamine = di-trans,octa-cis-undecaprenyl diphospho-[N-acetyl-alpha-D-glucosaminyl-(1-&gt;4)]-N-acetyl-alpha-D-muramoyl-L-alanyl-D-glutamyl-meso-2,6-diaminopimeloyl-D-alanyl-D-alanine + UDP + H(+). The protein operates within cell wall biogenesis; peptidoglycan biosynthesis. Functionally, cell wall formation. Catalyzes the transfer of a GlcNAc subunit on undecaprenyl-pyrophosphoryl-MurNAc-pentapeptide (lipid intermediate I) to form undecaprenyl-pyrophosphoryl-MurNAc-(pentapeptide)GlcNAc (lipid intermediate II). In Clavibacter sepedonicus (Clavibacter michiganensis subsp. sepedonicus), this protein is UDP-N-acetylglucosamine--N-acetylmuramyl-(pentapeptide) pyrophosphoryl-undecaprenol N-acetylglucosamine transferase.